A 797-amino-acid polypeptide reads, in one-letter code: MAAAPVAAGSGAGRGRRSAATVAAWGGWGGRPRPGNILLQLRQGQLTGRGLVRAVQFTETFLTERDKQSKWSGIPQLLLKLHTTSHLHSDFVECQNILKEISPLLSMEAMAFVTEERKLTQETTYPNTYIFDLFGGVDLLVEILMRPTISIRGQKLKISDEMSKDCLSILYNTCVCTEGVTKRLAEKNDFVIFLFTLMTSKKTFLQTATLIEDILGVKKEMIRLDEVPNLSSLVSNFDQQQLANFCRILAVTISEMDTGNDDKHTLLAKNAQQKKSLSLGPSAAEINQAALLSIPGFVERLCKLATRKVSESTGTASFLQELEEWYTWLDNALVLDALMRVANEESEHNQASIVFPPPGASEENGLPHTSARTQLPQSMKIMHEIMYKLEVLYVLCVLLMGRQRNQVHRMIAEFKLIPGLNNLFDKLIWRKHSASALVLHGHNQNCDCSPDITLKIQFLRLLQSFSDHHENKYLLLNNQELNELSAISLKANIPEVEAVLNTDRSLVCDGKRGLLTRLLQVMKKEPAESSFRFWQARAVESFLRGTTSYADQMFLLKRGLLEHILYCIVDSECKSRDVLQSYFDLLGELMKFNVDAFKRFNKYINTDAKFQVFLKQINSSLVDSNMLVRCVTLSLDRFENQVDMKVAEVLSECRLLAYISQVPTQMSFLFRLINIIHVQTLTQENVSCLNTSLVILMLARRKERLPLYLRLLQRMEHSKKYPGFLLNNFHNLLRFWQQHYLHKDKDSTCLENSSCISFSYWKETVSILLNPDRQSPSALVSYIEEPYMDIDRDFTEE.

The residue at position 2 (Ala2) is an N-acetylalanine. The interval 2 to 400 (AAAPVAAGSG…VLYVLCVLLM (399 aa)) is interaction with TNFRSF1A.

In terms of assembly, component of the DCX(TRPC4AP) E3 ubiquitin ligase complex, at least composed of CUL4A, DDB1, TRPC4AP/TRUSS and RBX1. Interacts with MYC. Constitutively associated with TNFRSF1A. Directly interacts with TRADD, TRAF2, CHUK, IKBKB and IKBKG. Interacts with TRPC1, TRPC4 and TRPC5. (Microbial infection) Interacts with Hepatitis B virus (HBV) protein X; leading to prevent ubiquitination of TRPC4AP by SKP2. In terms of processing, phosphorylated by GSK3B; phosphorylation is required for ubiquitination. Post-translationally, ubiquitinated by a SCF (SKP1-CUL1-F-box protein) E3 ubiquitin-protein ligase containing SKP2, leading to its degradation. Phosphorylation by GSK3B is required for ubiquitination.

It is found in the cytoplasm. The protein resides in the perinuclear region. It participates in protein modification; protein ubiquitination. Its function is as follows. Substrate-recognition component of a DCX (DDB1-CUL4-X-box) E3 ubiquitin-protein ligase complex required for cell cycle control. The DCX(TRPC4AP) complex specifically mediates the polyubiquitination and subsequent degradation of MYC as part of the DesCEND (destruction via C-end degrons) pathway. The DesCEND (destruction via C-end degrons) pathway recognizes a C-degron located at the extreme C terminus of target proteins, leading to their ubiquitination and degradation. The DCX(TRPC4AP) complex specifically recognizes proteins with an arginine at the minus 3 position (R-3 motif) at the C-terminus, such as MYC, leading to their ubiquitination and degradation. Also participates in the activation of NFKB1 in response to ligation of TNFRSF1A, possibly by linking TNFRSF1A to the IKK signalosome. Involved in JNK activation via its interaction with TRAF2. Also involved in elevation of endoplasmic reticulum Ca(2+) storage reduction in response to CHRM1. The chain is Short transient receptor potential channel 4-associated protein from Homo sapiens (Human).